The sequence spans 105 residues: Cell division protein FtsB (105 aa).

Residues 1 to 3 (MRI) lie on the Cytoplasmic side of the membrane. A helical membrane pass occupies residues 4–21 (VIYSMLVLLIAIQYPLWL). At 22–105 (GKGGWLKVYE…DTAKASTVKQ (84 aa)) the chain is on the periplasmic side. Residues 32 to 60 (MEKQVELQEAKNSLLALRNAKLEGDVKDL) adopt a coiled-coil conformation.

Belongs to the FtsB family. As to quaternary structure, part of a complex composed of FtsB, FtsL and FtsQ.

The protein localises to the cell inner membrane. Essential cell division protein. May link together the upstream cell division proteins, which are predominantly cytoplasmic, with the downstream cell division proteins, which are predominantly periplasmic. This chain is Cell division protein FtsB, found in Polynucleobacter asymbioticus (strain DSM 18221 / CIP 109841 / QLW-P1DMWA-1) (Polynucleobacter necessarius subsp. asymbioticus).